We begin with the raw amino-acid sequence, 474 residues long: MVQQTNNAENTEALLAGESSDSGAGLELGIASSPTPGSTASTGGKADDPSWCKTPSGHIKRPMNAFMVWSQIERRKIMEQSPDMHNAEISKRLGKRWKLLKDSDKIPFIREAERLRLKHMADYPDYKYRPRKKVKSGNANSSSSAAASSKPGEKGDKVGGSGGGGHGGGGGGGSSNAGGGGGGASGGGANSKPAQKKSCGSKVAGGAGGGVSKPHAKLILAGGGGGGKAAAAAAASFAAEQAGAAALLPLGAAADHHSLYKARTPSASASASSAASASAALAAPGKHLAEKKVKRVYLFGGLGTSSSPVGGVGAGADPSDPLGLYEEEGAGCSPDAPSLSGRSSAASSPAAGRSPADHRGYASLRAASPAPSSAPSHASSSASSHSSSSSSSGSSSSDDEFEDDLLDLNPSSNFESMSLGSFSSSSALDRDLDFNFEPGSGSHFEFPDYCTPEVSEMISGDWLESSISNLVFTY.

The segment covering 1–10 (MVQQTNNAEN) has biased composition (polar residues). A disordered region spans residues 1–58 (MVQQTNNAENTEALLAGESSDSGAGLELGIASSPTPGSTASTGGKADDPSWCKTPSGH). Over residues 31-44 (ASSPTPGSTASTGG) the composition is skewed to low complexity. A DNA-binding region (HMG box) is located at residues 59–127 (IKRPMNAFMV…KHMADYPDYK (69 aa)). At lysine 95 the chain carries N6-acetyllysine. 3 disordered regions span residues 128–228 (YRPR…GGGK), 262–286 (ARTP…APGK), and 302–416 (LGTS…NFES). The span at 138 to 149 (NANSSSSAAASS) shows a compositional bias: low complexity. Over residues 158–189 (VGGSGGGGHGGGGGGGSSNAGGGGGGASGGGA) the composition is skewed to gly residues. 4 stretches are compositionally biased toward low complexity: residues 266 to 283 (SASA…ALAA), 304 to 320 (TSSS…DPSD), 336 to 354 (APSL…AGRS), and 366 to 396 (AASP…GSSS). Acidic residues predominate over residues 397-406 (SDDEFEDDLL). Over residues 407 to 416 (DLNPSSNFES) the composition is skewed to low complexity. The 9aaTAD motif lies at 426-434 (SALDRDLDF).

As to quaternary structure, interacts with UBE2I. Interacts with HDAC1; interaction inhibits the transcriptional activator activity. In terms of processing, acetylation at Lys-95 by KAT5 promotes the transcription activator activity and is required during myoblast differentiation. Acetylation by KAT5 abolishes the interaction between SOX4 and HDAC1 and switches SOX4 into a transcriptional activator. Testis, brain, and heart.

The protein localises to the nucleus. In terms of biological role, transcriptional activator that binds with high affinity to the T-cell enhancer motif 5'-AACAAAG-3' motif. Required for IL17A-producing Vgamma2-positive gamma-delta T-cell maturation and development, via binding to regulator loci of RORC to modulate expression. Involved in skeletal myoblast differentiation by promoting gene expression of CALD1. This chain is Transcription factor SOX-4, found in Homo sapiens (Human).